The following is a 190-amino-acid chain: Ribosome hibernation promotion factor (190 aa).

Residues 101-190 (RDRGDQEVFV…KYGLIQTSEQ (90 aa)) are required for ribosome-binding.

It belongs to the HPF/YfiA ribosome-associated protein family. Long HPF subfamily. As to quaternary structure, interacts with 100S ribosomes during exponential growth, as 100S ribosomes decrease (after 28 hours) also found associated with 30s and 50S subunits.

It localises to the cytoplasm. Required and sufficient for dimerization of active 70S ribosomes into 100S ribosomes. 110S ribosomes are probably translationally inactive and may serve as a reservoir of easily reactivated ribosomes when necessary in the cell. Also reduces the translation efficiency of a small number of genes. Unlike E.coli, 100S ribosomes are present during exponential growth and decrease during stationary phase. This strain produces 30% fewer 100S ribosomes than strain N315 and RN4200 under the same growth conditions. This Staphylococcus aureus (strain USA300) protein is Ribosome hibernation promotion factor.